The following is a 152-amino-acid chain: Protein Smg homolog (152 aa).

Belongs to the Smg family.

The protein is Protein Smg homolog of Nitrosomonas europaea (strain ATCC 19718 / CIP 103999 / KCTC 2705 / NBRC 14298).